The following is a 303-amino-acid chain: Serine/threonine-protein phosphatase PP-X homolog 2 (303 aa).

Mn(2+)-binding residues include D51, H53, D79, and N111. Catalysis depends on H112, which acts as the Proton donor. The Mn(2+) site is built by H161 and H235.

The protein belongs to the PPP phosphatase family. PP-4 (PP-X) subfamily. Requires Mn(2+) as cofactor.

The catalysed reaction is O-phospho-L-seryl-[protein] + H2O = L-seryl-[protein] + phosphate. It carries out the reaction O-phospho-L-threonyl-[protein] + H2O = L-threonyl-[protein] + phosphate. The chain is Serine/threonine-protein phosphatase PP-X homolog 2 (Ppx2) from Paramecium tetraurelia.